The following is a 339-amino-acid chain: 4-hydroxy-2-oxovalerate aldolase 3 (339 aa).

The Pyruvate carboxyltransferase domain occupies 7-259 (IRVTDTSLRD…KTGIDFFAIA (253 aa)). 15 to 16 (RD) is a substrate binding site. D16 contributes to the Mn(2+) binding site. H19 (proton acceptor) is an active-site residue. Substrate is bound by residues S169 and H198. Residues H198 and H200 each contribute to the Mn(2+) site. Residue Y289 coordinates substrate.

The protein belongs to the 4-hydroxy-2-oxovalerate aldolase family.

It carries out the reaction (S)-4-hydroxy-2-oxopentanoate = acetaldehyde + pyruvate. This Rhodococcus jostii (strain RHA1) protein is 4-hydroxy-2-oxovalerate aldolase 3 (hsaF).